The following is a 183-amino-acid chain: Adenine phosphoribosyltransferase (183 aa).

The protein belongs to the purine/pyrimidine phosphoribosyltransferase family. As to quaternary structure, homodimer.

Its subcellular location is the cytoplasm. It carries out the reaction AMP + diphosphate = 5-phospho-alpha-D-ribose 1-diphosphate + adenine. It participates in purine metabolism; AMP biosynthesis via salvage pathway; AMP from adenine: step 1/1. In terms of biological role, catalyzes a salvage reaction resulting in the formation of AMP, that is energically less costly than de novo synthesis. This chain is Adenine phosphoribosyltransferase, found in Proteus mirabilis (strain HI4320).